Consider the following 160-residue polypeptide: Ureidoglycolate lyase (160 aa).

This sequence belongs to the ureidoglycolate lyase family. As to quaternary structure, homodimer. Ni(2+) is required as a cofactor.

It catalyses the reaction (S)-ureidoglycolate = urea + glyoxylate. The protein operates within nitrogen metabolism; (S)-allantoin degradation. In terms of biological role, catalyzes the catabolism of the allantoin degradation intermediate (S)-ureidoglycolate, generating urea and glyoxylate. Involved in the utilization of allantoin as nitrogen source. This chain is Ureidoglycolate lyase, found in Salmonella gallinarum (strain 287/91 / NCTC 13346).